We begin with the raw amino-acid sequence, 208 residues long: Orotidine 5'-phosphate decarboxylase (208 aa).

Residues D7, K29, 57-66 (DLKLADIPNT), S109, 162-172 (PGIGAQGGKAK), G185, and R186 each bind substrate. K59 functions as the Proton donor in the catalytic mechanism.

This sequence belongs to the OMP decarboxylase family. Type 1 subfamily. As to quaternary structure, homodimer.

The catalysed reaction is orotidine 5'-phosphate + H(+) = UMP + CO2. It functions in the pathway pyrimidine metabolism; UMP biosynthesis via de novo pathway; UMP from orotate: step 2/2. Functionally, catalyzes the decarboxylation of orotidine 5'-monophosphate (OMP) to uridine 5'-monophosphate (UMP). This chain is Orotidine 5'-phosphate decarboxylase (pyrF), found in Pyrococcus horikoshii (strain ATCC 700860 / DSM 12428 / JCM 9974 / NBRC 100139 / OT-3).